The chain runs to 168 residues: Putative postmeiotic segregation increased 2-like protein 3 (168 aa).

Residues 8-84 form the KRAB domain; that stretch reads VSFKDVAVDF…EGEFPCQHSP (77 aa).

Belongs to the DNA mismatch repair MutL/HexB family.

The polypeptide is Putative postmeiotic segregation increased 2-like protein 3 (PMS2P3) (Homo sapiens (Human)).